Here is a 252-residue protein sequence, read N- to C-terminus: Triosephosphate isomerase (252 aa).

Residue 10–12 (NWK) coordinates substrate. His-96 acts as the Electrophile in catalysis. Residue Glu-168 is the Proton acceptor of the active site. Substrate contacts are provided by residues Gly-174, Ser-214, and 235-236 (GG).

Belongs to the triosephosphate isomerase family. In terms of assembly, homodimer.

Its subcellular location is the cytoplasm. The catalysed reaction is D-glyceraldehyde 3-phosphate = dihydroxyacetone phosphate. Its pathway is carbohydrate biosynthesis; gluconeogenesis. It participates in carbohydrate degradation; glycolysis; D-glyceraldehyde 3-phosphate from glycerone phosphate: step 1/1. In terms of biological role, involved in the gluconeogenesis. Catalyzes stereospecifically the conversion of dihydroxyacetone phosphate (DHAP) to D-glyceraldehyde-3-phosphate (G3P). The protein is Triosephosphate isomerase of Streptococcus pneumoniae serotype 2 (strain D39 / NCTC 7466).